The sequence spans 405 residues: Imidazolonepropionase (405 aa).

2 residues coordinate Fe(3+): histidine 72 and histidine 74. Positions 72 and 74 each coordinate Zn(2+). 4-imidazolone-5-propanoate is bound by residues arginine 81, tyrosine 144, and histidine 177. Residue tyrosine 144 coordinates N-formimidoyl-L-glutamate. Fe(3+) is bound at residue histidine 242. Position 242 (histidine 242) interacts with Zn(2+). Residue glutamine 245 coordinates 4-imidazolone-5-propanoate. A Fe(3+)-binding site is contributed by aspartate 317. Residue aspartate 317 coordinates Zn(2+). N-formimidoyl-L-glutamate contacts are provided by asparagine 319 and glycine 321. Threonine 322 is a binding site for 4-imidazolone-5-propanoate.

Belongs to the metallo-dependent hydrolases superfamily. HutI family. The cofactor is Zn(2+). Fe(3+) is required as a cofactor.

It localises to the cytoplasm. It carries out the reaction 4-imidazolone-5-propanoate + H2O = N-formimidoyl-L-glutamate. It functions in the pathway amino-acid degradation; L-histidine degradation into L-glutamate; N-formimidoyl-L-glutamate from L-histidine: step 3/3. Its function is as follows. Catalyzes the hydrolytic cleavage of the carbon-nitrogen bond in imidazolone-5-propanoate to yield N-formimidoyl-L-glutamate. It is the third step in the universal histidine degradation pathway. The polypeptide is Imidazolonepropionase (Klebsiella pneumoniae (strain 342)).